Reading from the N-terminus, the 287-residue chain is MFRVGLFLATNLAILLLLGLVMSLLGLDSRSASGLLLMAGCFGMGGSLISLALSKWIAKKATGAHVIEQPRNGTEEWLLHTVARQAQTAGIGMPEVAVYEADDMNAFATGMRRDAALVAVSTGLIRGMSQDEVEAVLAHEMSHIANGDMVTLSLIQGVLNTFVIFLSRMAANVIDNFLSSDEDGGGLGFFGYMAVSMLLEFVFGLFASMIVMWFSRRREFRADYGATELASKQKMIAALARLQQQHISSSLPEQVAAFGIRPRQGGLAELFRSHPSLEDRIAALEAI.

The next 2 membrane-spanning stretches (helical) occupy residues 4 to 24 and 35 to 53; these read VGLFLATNLAILLLLGLVMSL and LLLMAGCFGMGGSLISLAL. H139 contacts Zn(2+). Residue E140 is part of the active site. H143 contacts Zn(2+). 2 consecutive transmembrane segments (helical) span residues 147–167 and 194–214; these read GDMVTLSLIQGVLNTFVIFLS and AVSMLLEFVFGLFASMIVMWF. Zn(2+) is bound at residue E219.

The protein belongs to the peptidase M48B family. It depends on Zn(2+) as a cofactor.

The protein localises to the cell inner membrane. This is Protease HtpX homolog from Desulfotalea psychrophila (strain LSv54 / DSM 12343).